We begin with the raw amino-acid sequence, 433 residues long: 3-phosphoshikimate 1-carboxyvinyltransferase (433 aa).

3-phosphoshikimate is bound by residues K22, S23, and R27. Phosphoenolpyruvate is bound at residue K22. G95 and R123 together coordinate phosphoenolpyruvate. 3-phosphoshikimate contacts are provided by S167, Q169, D315, and K342. Phosphoenolpyruvate is bound at residue Q169. The active-site Proton acceptor is the D315. Phosphoenolpyruvate contacts are provided by R346 and R387.

It belongs to the EPSP synthase family. As to quaternary structure, monomer.

It is found in the cytoplasm. The enzyme catalyses 3-phosphoshikimate + phosphoenolpyruvate = 5-O-(1-carboxyvinyl)-3-phosphoshikimate + phosphate. The protein operates within metabolic intermediate biosynthesis; chorismate biosynthesis; chorismate from D-erythrose 4-phosphate and phosphoenolpyruvate: step 6/7. Functionally, catalyzes the transfer of the enolpyruvyl moiety of phosphoenolpyruvate (PEP) to the 5-hydroxyl of shikimate-3-phosphate (S3P) to produce enolpyruvyl shikimate-3-phosphate and inorganic phosphate. This Legionella pneumophila subsp. pneumophila (strain Philadelphia 1 / ATCC 33152 / DSM 7513) protein is 3-phosphoshikimate 1-carboxyvinyltransferase.